The sequence spans 335 residues: Glycerol-3-phosphate dehydrogenase [NAD(P)+] (335 aa).

NADPH is bound by residues serine 10, phenylalanine 11, arginine 31, and lysine 105. Sn-glycerol 3-phosphate is bound by residues lysine 105, glycine 136, and serine 138. An NADPH-binding site is contributed by alanine 140. Sn-glycerol 3-phosphate is bound by residues lysine 191, aspartate 244, serine 254, arginine 255, and asparagine 256. The active-site Proton acceptor is lysine 191. An NADPH-binding site is contributed by arginine 255. NADPH is bound by residues valine 279 and glutamate 281.

The protein belongs to the NAD-dependent glycerol-3-phosphate dehydrogenase family.

It is found in the cytoplasm. The catalysed reaction is sn-glycerol 3-phosphate + NAD(+) = dihydroxyacetone phosphate + NADH + H(+). It catalyses the reaction sn-glycerol 3-phosphate + NADP(+) = dihydroxyacetone phosphate + NADPH + H(+). It participates in membrane lipid metabolism; glycerophospholipid metabolism. In terms of biological role, catalyzes the reduction of the glycolytic intermediate dihydroxyacetone phosphate (DHAP) to sn-glycerol 3-phosphate (G3P), the key precursor for phospholipid synthesis. The chain is Glycerol-3-phosphate dehydrogenase [NAD(P)+] from Myxococcus xanthus (strain DK1622).